Consider the following 346-residue polypeptide: DNA-directed RNA polymerase subunit alpha (346 aa).

The segment at 1–242 is alpha N-terminal domain (alpha-NTD); it reads MLIQDGDKLI…DQLSVFINFD (242 aa). Positions 258-346 are alpha C-terminal domain (alpha-CTD); it reads LNPNLFKSID…WLKRKEKNEA (89 aa).

This sequence belongs to the RNA polymerase alpha chain family. In terms of assembly, homodimer. The RNAP catalytic core consists of 2 alpha, 1 beta, 1 beta' and 1 omega subunit. When a sigma factor is associated with the core the holoenzyme is formed, which can initiate transcription.

It catalyses the reaction RNA(n) + a ribonucleoside 5'-triphosphate = RNA(n+1) + diphosphate. Its function is as follows. DNA-dependent RNA polymerase catalyzes the transcription of DNA into RNA using the four ribonucleoside triphosphates as substrates. This chain is DNA-directed RNA polymerase subunit alpha, found in Maridesulfovibrio salexigens (strain ATCC 14822 / DSM 2638 / NCIMB 8403 / VKM B-1763) (Desulfovibrio salexigens).